The chain runs to 485 residues: Protein nucleotidyltransferase YdiU (485 aa).

ATP is bound by residues G100, G102, R103, K123, D135, G136, R189, and R196. The active-site Proton acceptor is the D265. N266 and D275 together coordinate Mg(2+). Residue D275 coordinates ATP.

It belongs to the SELO family. Mg(2+) is required as a cofactor. Requires Mn(2+) as cofactor.

It catalyses the reaction L-seryl-[protein] + ATP = 3-O-(5'-adenylyl)-L-seryl-[protein] + diphosphate. It carries out the reaction L-threonyl-[protein] + ATP = 3-O-(5'-adenylyl)-L-threonyl-[protein] + diphosphate. The catalysed reaction is L-tyrosyl-[protein] + ATP = O-(5'-adenylyl)-L-tyrosyl-[protein] + diphosphate. The enzyme catalyses L-histidyl-[protein] + UTP = N(tele)-(5'-uridylyl)-L-histidyl-[protein] + diphosphate. It catalyses the reaction L-seryl-[protein] + UTP = O-(5'-uridylyl)-L-seryl-[protein] + diphosphate. It carries out the reaction L-tyrosyl-[protein] + UTP = O-(5'-uridylyl)-L-tyrosyl-[protein] + diphosphate. Nucleotidyltransferase involved in the post-translational modification of proteins. It can catalyze the addition of adenosine monophosphate (AMP) or uridine monophosphate (UMP) to a protein, resulting in modifications known as AMPylation and UMPylation. This chain is Protein nucleotidyltransferase YdiU, found in Trichormus variabilis (strain ATCC 29413 / PCC 7937) (Anabaena variabilis).